Reading from the N-terminus, the 106-residue chain is V-type proton ATPase subunit G2 (106 aa).

At Met-1 the chain carries N-acetylmethionine. A disordered region spans residues 31 to 67 (LKQAKEEAETEVAEHKTSTEQGFQRKLEATSGDSGAN). Residues 33–58 (QAKEEAETEVAEHKTSTEQGFQRKLE) are compositionally biased toward basic and acidic residues.

Belongs to the V-ATPase G subunit family. As to quaternary structure, V-ATPase is a heteromultimeric enzyme composed of a peripheral catalytic V1 complex (components A to H) attached to an integral membrane V0 proton pore complex (components: a, c, c'', d and e).

Its subcellular location is the vacuole membrane. Catalytic subunit of the peripheral V1 complex of vacuolar ATPase (V-ATPase). V-ATPase is responsible for acidifying a variety of intracellular compartments in eukaryotic cells. The polypeptide is V-type proton ATPase subunit G2 (VHA-G2) (Arabidopsis thaliana (Mouse-ear cress)).